The primary structure comprises 491 residues: Cobyric acid synthase (491 aa).

Residues 250–439 (ELNIIVIRLP…LHGIFDNGSW (190 aa)) form the GATase cobBQ-type domain. Cysteine 331 acts as the Nucleophile in catalysis. The active site involves histidine 431.

Belongs to the CobB/CobQ family. CobQ subfamily.

It functions in the pathway cofactor biosynthesis; adenosylcobalamin biosynthesis. In terms of biological role, catalyzes amidations at positions B, D, E, and G on adenosylcobyrinic A,C-diamide. NH(2) groups are provided by glutamine, and one molecule of ATP is hydrogenolyzed for each amidation. The sequence is that of Cobyric acid synthase from Microcystis aeruginosa (strain NIES-843 / IAM M-2473).